We begin with the raw amino-acid sequence, 408 residues long: Histidine--tRNA ligase (408 aa).

The protein belongs to the class-II aminoacyl-tRNA synthetase family. Homodimer.

It is found in the cytoplasm. It catalyses the reaction tRNA(His) + L-histidine + ATP = L-histidyl-tRNA(His) + AMP + diphosphate + H(+). The protein is Histidine--tRNA ligase of Campylobacter jejuni subsp. jejuni serotype O:23/36 (strain 81-176).